Reading from the N-terminus, the 256-residue chain is Phosphatidylglycerol--prolipoprotein diacylglyceryl transferase (256 aa).

3 helical membrane passes run valine 19–tryptophan 39, leucine 56–tyrosine 76, and isoleucine 91–leucine 111. Arginine 139 contributes to the a 1,2-diacyl-sn-glycero-3-phospho-(1'-sn-glycerol) binding site. Residues phenylalanine 231–leucine 251 form a helical membrane-spanning segment.

Belongs to the Lgt family.

The protein resides in the cell inner membrane. It catalyses the reaction L-cysteinyl-[prolipoprotein] + a 1,2-diacyl-sn-glycero-3-phospho-(1'-sn-glycerol) = an S-1,2-diacyl-sn-glyceryl-L-cysteinyl-[prolipoprotein] + sn-glycerol 1-phosphate + H(+). Its pathway is protein modification; lipoprotein biosynthesis (diacylglyceryl transfer). Catalyzes the transfer of the diacylglyceryl group from phosphatidylglycerol to the sulfhydryl group of the N-terminal cysteine of a prolipoprotein, the first step in the formation of mature lipoproteins. In Legionella pneumophila (strain Paris), this protein is Phosphatidylglycerol--prolipoprotein diacylglyceryl transferase.